Here is a 264-residue protein sequence, read N- to C-terminus: uncharacterized protein (264 aa).

The signal sequence occupies residues 1 to 22; that stretch reads MIHSKKLTLGICLVLLIILIGG. Residue Cys-23 is the site of N-palmitoyl cysteine attachment. Cys-23 carries the S-diacylglycerol cysteine lipid modification.

It belongs to the staphylococcal tandem lipoprotein family.

It localises to the cell membrane. This is an uncharacterized protein from Staphylococcus aureus (strain N315).